The chain runs to 499 residues: Glucose-6-phosphate isomerase (499 aa).

The active-site Proton donor is Glu352. Residues His383 and Lys487 contribute to the active site.

Belongs to the GPI family.

It is found in the cytoplasm. It carries out the reaction alpha-D-glucose 6-phosphate = beta-D-fructose 6-phosphate. It functions in the pathway carbohydrate biosynthesis; gluconeogenesis. The protein operates within carbohydrate degradation; glycolysis; D-glyceraldehyde 3-phosphate and glycerone phosphate from D-glucose: step 2/4. Catalyzes the reversible isomerization of glucose-6-phosphate to fructose-6-phosphate. The polypeptide is Glucose-6-phosphate isomerase (Legionella pneumophila (strain Paris)).